Reading from the N-terminus, the 376-residue chain is Queuine tRNA-ribosyltransferase (376 aa).

Aspartate 93 serves as the catalytic Proton acceptor. Residues 93–97 (DSGGF), aspartate 147, glutamine 190, and glycine 217 each bind substrate. The interval 248–254 (GVGKPDD) is RNA binding. The active-site Nucleophile is aspartate 267. The Zn(2+) site is built by cysteine 305, cysteine 307, cysteine 310, and histidine 336.

It belongs to the queuine tRNA-ribosyltransferase family. Homodimer. Within each dimer, one monomer is responsible for RNA recognition and catalysis, while the other monomer binds to the replacement base PreQ1. The cofactor is Zn(2+).

It carries out the reaction 7-aminomethyl-7-carbaguanine + guanosine(34) in tRNA = 7-aminomethyl-7-carbaguanosine(34) in tRNA + guanine. It functions in the pathway tRNA modification; tRNA-queuosine biosynthesis. Catalyzes the base-exchange of a guanine (G) residue with the queuine precursor 7-aminomethyl-7-deazaguanine (PreQ1) at position 34 (anticodon wobble position) in tRNAs with GU(N) anticodons (tRNA-Asp, -Asn, -His and -Tyr). Catalysis occurs through a double-displacement mechanism. The nucleophile active site attacks the C1' of nucleotide 34 to detach the guanine base from the RNA, forming a covalent enzyme-RNA intermediate. The proton acceptor active site deprotonates the incoming PreQ1, allowing a nucleophilic attack on the C1' of the ribose to form the product. After dissociation, two additional enzymatic reactions on the tRNA convert PreQ1 to queuine (Q), resulting in the hypermodified nucleoside queuosine (7-(((4,5-cis-dihydroxy-2-cyclopenten-1-yl)amino)methyl)-7-deazaguanosine). The protein is Queuine tRNA-ribosyltransferase of Ruegeria sp. (strain TM1040) (Silicibacter sp.).